A 320-amino-acid polypeptide reads, in one-letter code: uncharacterized protein (320 aa).

The next 7 membrane-spanning stretches (helical) occupy residues 107–127 (LSKENMLMLILSTIVAIAGIY), 131–151 (VALLIASMIIAPLLGPNIALS), 169–189 (LIAELIFVIILSMIAGHYLPI), 200–220 (ITLDFWSIIIALSAGIAGSLS), 228–248 (IAVGVMIAIALLPPLAVFGLL), 260–280 (ALILFLINMIAINLSAIVIFS), and 299–319 (TLYAILLWVTLFIAIFVLIIY).

The protein resides in the cell membrane. This is an uncharacterized protein from Methanocaldococcus jannaschii (strain ATCC 43067 / DSM 2661 / JAL-1 / JCM 10045 / NBRC 100440) (Methanococcus jannaschii).